The chain runs to 855 residues: Pre-mRNA-splicing factor SYF1 (855 aa).

9 HAT repeats span residues 15–47 (LVFE…FKQG), 48–80 (APKP…ARRA), 90–122 (PAYE…FLMD), 124–158 (GRVT…FLRS), 160–192 (PLPE…SSDR), 198–230 (QRLA…LISQ), 235–268 (VQSL…YYIR), 270–305 (GHFE…FEES), and 369–407 (GRPR…FYED). Lysine 420 is subject to N6-acetyllysine. HAT repeat units lie at residues 498–530 (GTFQ…FLEE), 532–566 (KYFE…KFIA), 571–605 (RKLE…LEEE), 643–677 (YGVT…MECK), and 679–713 (GEID…FEVR). Residues 810–855 (LAQQVNPEEIQLGEDEDEDEMDLEPNEVRLEQQSVPAAVFGSLKED) form a disordered region. Residues 820-834 (QLGEDEDEDEMDLEP) are compositionally biased toward acidic residues. Serine 851 is modified (phosphoserine).

The protein belongs to the crooked-neck family. In terms of assembly, associates with RNA polymerase II, the TCR-specific proteins CKN1/CSA and ERCC6/CSB, and XPA. Identified in the spliceosome C complex. Component of the XAB2 complex, a multimeric protein complex composed of XAB2, PRPF19, AQR, ZNF830, ISY1, and PPIE. Identified in a pentameric intron-binding (IB) complex composed of AQR, XAB2, ISY1, ZNF830 and PPIE that is incorporated into the spliceosome as a preassembled complex. The IB complex does not contain PRPF19.

The protein localises to the nucleus. Functionally, involved in pre-mRNA splicing as component of the spliceosome. Involved in transcription-coupled repair (TCR), transcription and pre-mRNA splicing. This is Pre-mRNA-splicing factor SYF1 (XAB2) from Homo sapiens (Human).